A 102-amino-acid chain; its full sequence is Small ribosomal subunit protein uS14m (102 aa).

It belongs to the universal ribosomal protein uS14 family.

The protein resides in the mitochondrion. The protein is Small ribosomal subunit protein uS14m (RPS14) of Paramecium tetraurelia.